Consider the following 567-residue polypeptide: MKTISRQAYADMFGPTTGDRLRLADTELFLEIEQDFTTYGEEVKFGGGKVIRDGMGQSQVVSAECVDVLITNAIIIDHWGIVKADIGIKDGRITGIGKAGNPDVQPNVDIVIGPGTEVVAGEGKIITAGGVDTHIHFICPQQAEEGLISGVTTFIGGGTGPVAGTNATTVTPGIWNMHRMLEAVDELPINVGLFGKGCVSQPEAIREQIEAGAIGLKIHEDWGATPMAIHNCLNVADEMDVQVAIHSDTLNEGGFYEETVKAIAGRVIHVFHTEGAGGGHAPDVIKSVGEPNILPASTNPTMPYTINTVDEHLDMLMVCHHLDPSIPEDVAFAESRIRRETIAAEDILHDMGAISVMSSDSQAMGRVGEVVMRTWQCAHKMKLQRGSLAGDTAENDNNRIKRYIAKYTINPALAHGIAHEVGSIEKGKLADIVLWDPAFFGVKPALIMKGGMVAYAPMGDINAAIPTPQPVHYRPMYACLGKAKYQTSMIFMSKAGIDAGVPEKLGLQSLIGRVEGCRKVTKASMIHNSYVPHIELEPQTYIVKADGVPLVCEPATELPMAQRYFLF.

The region spanning 129–567 (GGVDTHIHFI…LPMAQRYFLF (439 aa)) is the Urease domain. H134, H136, and K217 together coordinate Ni(2+). K217 bears the N6-carboxylysine mark. H219 is a substrate binding site. Positions 246 and 272 each coordinate Ni(2+). Catalysis depends on H320, which acts as the Proton donor. D360 lines the Ni(2+) pocket.

The protein belongs to the metallo-dependent hydrolases superfamily. Urease alpha subunit family. In terms of assembly, heterotrimer of UreA (gamma), UreB (beta) and UreC (alpha) subunits. Three heterotrimers associate to form the active enzyme. Requires Ni cation as cofactor. In terms of processing, carboxylation allows a single lysine to coordinate two nickel ions.

The protein localises to the cytoplasm. The catalysed reaction is urea + 2 H2O + H(+) = hydrogencarbonate + 2 NH4(+). It participates in nitrogen metabolism; urea degradation; CO(2) and NH(3) from urea (urease route): step 1/1. The chain is Urease subunit alpha from Proteus hauseri.